Consider the following 272-residue polypeptide: Shikimate dehydrogenase (NADP(+)) (272 aa).

Shikimate-binding positions include Ser14 to Ser16 and Thr61. Lys65 (proton acceptor) is an active-site residue. An NADP(+)-binding site is contributed by Glu77. Asn86 and Asp102 together coordinate shikimate. Residues Gly126–Ala130, Asn149–Arg154, and Met213 each bind NADP(+). Tyr215 provides a ligand contact to shikimate. NADP(+) is bound at residue Gly237.

The protein belongs to the shikimate dehydrogenase family. As to quaternary structure, homodimer.

It carries out the reaction shikimate + NADP(+) = 3-dehydroshikimate + NADPH + H(+). It functions in the pathway metabolic intermediate biosynthesis; chorismate biosynthesis; chorismate from D-erythrose 4-phosphate and phosphoenolpyruvate: step 4/7. Involved in the biosynthesis of the chorismate, which leads to the biosynthesis of aromatic amino acids. Catalyzes the reversible NADPH linked reduction of 3-dehydroshikimate (DHSA) to yield shikimate (SA). This is Shikimate dehydrogenase (NADP(+)) from Salmonella heidelberg (strain SL476).